The primary structure comprises 137 residues: Small ribosomal subunit protein uS12 (137 aa).

The tract at residues 1–57 (MPTINQLVRKPRKSKVEKPKSPALNVGYNSHKKVQTNVSSPQKRGVATRVGTMTPRK) is disordered. D102 is subject to 3-methylthioaspartic acid.

This sequence belongs to the universal ribosomal protein uS12 family. In terms of assembly, part of the 30S ribosomal subunit. Contacts proteins S8 and S17. May interact with IF1 in the 30S initiation complex.

In terms of biological role, with S4 and S5 plays an important role in translational accuracy. Functionally, interacts with and stabilizes bases of the 16S rRNA that are involved in tRNA selection in the A site and with the mRNA backbone. Located at the interface of the 30S and 50S subunits, it traverses the body of the 30S subunit contacting proteins on the other side and probably holding the rRNA structure together. The combined cluster of proteins S8, S12 and S17 appears to hold together the shoulder and platform of the 30S subunit. The protein is Small ribosomal subunit protein uS12 of Streptococcus pneumoniae (strain Hungary19A-6).